Reading from the N-terminus, the 1018-residue chain is Putative type I restriction enzyme MjaVIIIP endonuclease subunit (1018 aa).

Belongs to the HsdR family. The type I restriction/modification system is composed of three polypeptides R, M and S.

It carries out the reaction Endonucleolytic cleavage of DNA to give random double-stranded fragments with terminal 5'-phosphates, ATP is simultaneously hydrolyzed.. In terms of biological role, the restriction (R) subunit of a type I restriction enzyme that recognizes 5'-GAYN(5)GTAA-3' and cleaves a random distance away. The R subunit is required for both endonuclease and ATPase activities but not for modification. After locating a non-methylated recognition site, the enzyme complex serves as a molecular motor that translocates DNA in an ATP-dependent manner until a collision occurs that triggers cleavage. The polypeptide is Putative type I restriction enzyme MjaVIIIP endonuclease subunit (Methanocaldococcus jannaschii (strain ATCC 43067 / DSM 2661 / JAL-1 / JCM 10045 / NBRC 100440) (Methanococcus jannaschii)).